The primary structure comprises 241 residues: Chromosome partition protein MukE (241 aa).

The interval 207–241 (DGEAATPDSLSQEKSAVKNDEEIEDELDEGLGEEE) is disordered. A compositionally biased stretch (acidic residues) spans 227–241 (EEIEDELDEGLGEEE).

This sequence belongs to the MukE family. In terms of assembly, interacts, and probably forms a ternary complex, with MukF and MukB. The complex formation is stimulated by calcium or magnesium.

It localises to the cytoplasm. The protein resides in the nucleoid. Functionally, involved in chromosome condensation, segregation and cell cycle progression. May participate in facilitating chromosome segregation by condensation DNA from both sides of a centrally located replisome during cell division. Probably acts via its interaction with MukB and MukF. In Mannheimia succiniciproducens (strain KCTC 0769BP / MBEL55E), this protein is Chromosome partition protein MukE.